The following is a 190-amino-acid chain: Large ribosomal subunit protein uL6 (190 aa).

This sequence belongs to the universal ribosomal protein uL6 family.

The protein is Large ribosomal subunit protein uL6 (RpL9) of Spodoptera frugiperda (Fall armyworm).